The sequence spans 21 residues: Brevinin-2-related peptide (21 aa).

Leucine amide is present on Leu-21.

Expressed by the skin glands.

It localises to the secreted. Its function is as follows. Antimicrobial peptide with activity against Gram-negative and Gram-positive bacteria (MIC=13 uM against E.coli, MIC=25 uM against S.aureus) and fungi (MIC=25 uM against C.albicans). Also shows hemolytic activity (HC(50)=50 uM). In vitro, shows moderate inhibitory activity against HIV. This Lithobates septentrionalis (Mink frog) protein is Brevinin-2-related peptide.